The sequence spans 75 residues: Guanine nucleotide-binding protein G(I)/G(S)/G(O) subunit gamma-3 (75 aa).

Thr-5 is subject to Phosphothreonine. A Phosphoserine modification is found at Ser-9. Phosphothreonine is present on Thr-10. Ser-12 is modified (phosphoserine). Cys-72 carries the post-translational modification Cysteine methyl ester. Cys-72 is lipidated: S-geranylgeranyl cysteine. Residues 73-75 (ALL) constitute a propeptide, removed in mature form.

This sequence belongs to the G protein gamma family. G proteins are composed of 3 units, alpha, beta and gamma. Forms a complex with GNAO1 and GNB1. Interacts with SCN8A. Abundantly expressed in brain. Low levels in testis.

It localises to the cell membrane. Functionally, guanine nucleotide-binding proteins (G proteins) are involved as a modulator or transducer in various transmembrane signaling systems. The beta and gamma chains are required for the GTPase activity, for replacement of GDP by GTP, and for G protein-effector interaction. The sequence is that of Guanine nucleotide-binding protein G(I)/G(S)/G(O) subunit gamma-3 (GNG3) from Bos taurus (Bovine).